The primary structure comprises 308 residues: Aspartate carbamoyltransferase catalytic subunit (308 aa).

Arginine 59 and threonine 60 together coordinate carbamoyl phosphate. L-aspartate is bound at residue lysine 87. Arginine 109, histidine 139, and glutamine 142 together coordinate carbamoyl phosphate. Positions 172 and 224 each coordinate L-aspartate. 2 residues coordinate carbamoyl phosphate: alanine 265 and proline 266.

It belongs to the aspartate/ornithine carbamoyltransferase superfamily. ATCase family. Heterododecamer (2C3:3R2) of six catalytic PyrB chains organized as two trimers (C3), and six regulatory PyrI chains organized as three dimers (R2).

The enzyme catalyses carbamoyl phosphate + L-aspartate = N-carbamoyl-L-aspartate + phosphate + H(+). Its pathway is pyrimidine metabolism; UMP biosynthesis via de novo pathway; (S)-dihydroorotate from bicarbonate: step 2/3. Functionally, catalyzes the condensation of carbamoyl phosphate and aspartate to form carbamoyl aspartate and inorganic phosphate, the committed step in the de novo pyrimidine nucleotide biosynthesis pathway. The sequence is that of Aspartate carbamoyltransferase catalytic subunit from Enterococcus faecalis (strain ATCC 700802 / V583).